Reading from the N-terminus, the 512-residue chain is GMP synthase [glutamine-hydrolyzing] (512 aa).

Positions 7 to 197 (TILILDFGGQ…LFEVCDCSAD (191 aa)) constitute a Glutamine amidotransferase type-1 domain. C84 functions as the Nucleophile in the catalytic mechanism. Residues H171 and E173 contribute to the active site. In terms of domain architecture, GMPS ATP-PPase spans 198–387 (WTMDSLIEQT…LGIPDEILYR (190 aa)). 225–231 (SGGVDSA) contributes to the ATP binding site.

Homodimer.

It carries out the reaction XMP + L-glutamine + ATP + H2O = GMP + L-glutamate + AMP + diphosphate + 2 H(+). It participates in purine metabolism; GMP biosynthesis; GMP from XMP (L-Gln route): step 1/1. Catalyzes the synthesis of GMP from XMP. This chain is GMP synthase [glutamine-hydrolyzing], found in Caldanaerobacter subterraneus subsp. tengcongensis (strain DSM 15242 / JCM 11007 / NBRC 100824 / MB4) (Thermoanaerobacter tengcongensis).